We begin with the raw amino-acid sequence, 562 residues long: Arginine--tRNA ligase (562 aa).

Residues 121-131 carry the 'HIGH' region motif; that stretch reads PNIAKPISMGH.

It belongs to the class-I aminoacyl-tRNA synthetase family. As to quaternary structure, monomer.

The protein localises to the cytoplasm. It carries out the reaction tRNA(Arg) + L-arginine + ATP = L-arginyl-tRNA(Arg) + AMP + diphosphate. In Lactiplantibacillus plantarum (strain ATCC BAA-793 / NCIMB 8826 / WCFS1) (Lactobacillus plantarum), this protein is Arginine--tRNA ligase.